The chain runs to 317 residues: DNA-directed RNA polymerase subunit alpha (317 aa).

Residues 1–229 form an alpha N-terminal domain (alpha-NTD) region; that stretch reads MLNEFIYPDK…KHYELLENIF (229 aa). The tract at residues 245-317 is alpha C-terminal domain (alpha-CTD); sequence AEKLSLSIEE…ELGMNIETQR (73 aa).

It belongs to the RNA polymerase alpha chain family. In terms of assembly, homodimer. The RNAP catalytic core consists of 2 alpha, 1 beta, 1 beta' and 1 omega subunit. When a sigma factor is associated with the core the holoenzyme is formed, which can initiate transcription.

It carries out the reaction RNA(n) + a ribonucleoside 5'-triphosphate = RNA(n+1) + diphosphate. In terms of biological role, DNA-dependent RNA polymerase catalyzes the transcription of DNA into RNA using the four ribonucleoside triphosphates as substrates. This Aquifex aeolicus (strain VF5) protein is DNA-directed RNA polymerase subunit alpha.